Reading from the N-terminus, the 402-residue chain is Nicotinate phosphoribosyltransferase (402 aa).

Histidine 224 carries the phosphohistidine; by autocatalysis modification.

Belongs to the NAPRTase family. Transiently phosphorylated on a His residue during the reaction cycle. Phosphorylation strongly increases the affinity for substrates and increases the rate of nicotinate D-ribonucleotide production. Dephosphorylation regenerates the low-affinity form of the enzyme, leading to product release.

The catalysed reaction is nicotinate + 5-phospho-alpha-D-ribose 1-diphosphate + ATP + H2O = nicotinate beta-D-ribonucleotide + ADP + phosphate + diphosphate. Its pathway is cofactor biosynthesis; NAD(+) biosynthesis; nicotinate D-ribonucleotide from nicotinate: step 1/1. In terms of biological role, catalyzes the synthesis of beta-nicotinate D-ribonucleotide from nicotinate and 5-phospho-D-ribose 1-phosphate at the expense of ATP. The polypeptide is Nicotinate phosphoribosyltransferase (Neisseria meningitidis serogroup C (strain 053442)).